A 2216-amino-acid chain; its full sequence is RNA-directed RNA polymerase L (2216 aa).

The interval Lys26 to Arg289 is endonuclease. The Mn(2+) site is built by Glu51, Asp88, and Glu101. Residue Lys114 is part of the active site. Residues Leu1167–Val1364 enclose the RdRp catalytic domain. Asp1323 is a binding site for Mg(2+).

It belongs to the Bunyavirales RNA polymerase family. Homomultimer; the oligomeric structure is essential for the polymerase activity. Interacts with nucleoprotein N. Interacts with protein Z; this interaction inhibits viral transcription and replication, Z partially blocks the product exit tunnel for the releasing nascent RNA product. Requires Mn(2+) as cofactor. It depends on Mg(2+) as a cofactor.

It is found in the virion. The protein localises to the host cytoplasm. It catalyses the reaction RNA(n) + a ribonucleoside 5'-triphosphate = RNA(n+1) + diphosphate. RNA-dependent RNA polymerase, which is responsible for the replication and transcription of the viral RNA genome using antigenomic RNA as an intermediate. During transcription, synthesizes subgenomic RNAs and assures their capping by a cap-snatching mechanism, which involves the endonuclease activity cleaving the host capped pre-mRNAs. These short capped RNAs are then used as primers for viral transcription. The 3'-end of subgenomic mRNAs molecules are heterogeneous and not polyadenylated. The replicase function is to direct synthesis of antigenomic and genomic RNA which are encapsidated and non capped. As a consequence of the use of the same enzyme for both transcription and replication, these mechanisms need to be well coordinated. These processes may be regulated by proteins N and Z in a dose-dependent manner. Z protein inhibits the viral polymerase L und thus the viral transcription and RNA synthesis. The polypeptide is RNA-directed RNA polymerase L (Bear Canyon mammarenavirus (isolate Mouse/United States/AV A0070039/2000) (BCNV)).